The sequence spans 861 residues: DNA mismatch repair protein MutS (861 aa).

614 to 621 (GPNMGGKS) lines the ATP pocket.

It belongs to the DNA mismatch repair MutS family.

In terms of biological role, this protein is involved in the repair of mismatches in DNA. It is possible that it carries out the mismatch recognition step. This protein has a weak ATPase activity. The polypeptide is DNA mismatch repair protein MutS (Mannheimia succiniciproducens (strain KCTC 0769BP / MBEL55E)).